The following is a 699-amino-acid chain: SPX domain-containing membrane protein At4g22990 (699 aa).

The SPX domain occupies 2–145; it reads VAFGKKLKER…GYRFTNYYVK (144 aa). 6 helical membrane-spanning segments follow: residues 249–269, 280–300, 317–337, 339–358, 377–397, and 413–433; these read FMSL…TYII, LGAA…AQLF, LIFS…AFDF, SIAV…ARAV, AGFV…AGLL, and LPGW…AISF. A compositionally biased stretch (acidic residues) spans 475 to 490; that stretch reads IEEQGEDECDGSEEAS. The tract at residues 475 to 494 is disordered; sequence IEEQGEDECDGSEEASEDSR. 5 consecutive transmembrane segments (helical) span residues 515 to 535, 546 to 566, 578 to 598, 606 to 626, and 671 to 691; these read LLIY…SSVI, SVAI…LVVG, ILLV…HVVV, VCSG…NLSL, and MLLN…IVAT.

This sequence belongs to the major facilitator superfamily.

It is found in the membrane. This chain is SPX domain-containing membrane protein At4g22990, found in Arabidopsis thaliana (Mouse-ear cress).